A 77-amino-acid chain; its full sequence is Acyl carrier protein (77 aa).

The Carrier domain maps to 4–77 (SETFEKVKKI…TVQAAVDXIN (74 aa)). Serine 40 is subject to O-(pantetheine 4'-phosphoryl)serine.

It belongs to the acyl carrier protein (ACP) family. 4'-phosphopantetheine is transferred from CoA to a specific serine of apo-ACP by AcpS. This modification is essential for activity because fatty acids are bound in thioester linkage to the sulfhydryl of the prosthetic group.

The protein localises to the cytoplasm. It functions in the pathway lipid metabolism; fatty acid biosynthesis. Functionally, carrier of the growing fatty acid chain in fatty acid biosynthesis. The protein is Acyl carrier protein of Anabaena variabilis.